Here is a 270-residue protein sequence, read N- to C-terminus: Formamidopyrimidine-DNA glycosylase (270 aa).

The active-site Schiff-base intermediate with DNA is proline 2. The active-site Proton donor is glutamate 3. Lysine 58 (proton donor; for beta-elimination activity) is an active-site residue. The DNA site is built by histidine 91, arginine 110, and lysine 151. An FPG-type zinc finger spans residues 236–270 (FVYGRGGEACKVCGTELRNVVLGQRASVFCPRCQR). Residue arginine 260 is the Proton donor; for delta-elimination activity of the active site.

Belongs to the FPG family. Monomer. Zn(2+) serves as cofactor.

The catalysed reaction is Hydrolysis of DNA containing ring-opened 7-methylguanine residues, releasing 2,6-diamino-4-hydroxy-5-(N-methyl)formamidopyrimidine.. The enzyme catalyses 2'-deoxyribonucleotide-(2'-deoxyribose 5'-phosphate)-2'-deoxyribonucleotide-DNA = a 3'-end 2'-deoxyribonucleotide-(2,3-dehydro-2,3-deoxyribose 5'-phosphate)-DNA + a 5'-end 5'-phospho-2'-deoxyribonucleoside-DNA + H(+). Involved in base excision repair of DNA damaged by oxidation or by mutagenic agents. Acts as a DNA glycosylase that recognizes and removes damaged bases. Has a preference for oxidized purines, such as 7,8-dihydro-8-oxoguanine (8-oxoG). Has AP (apurinic/apyrimidinic) lyase activity and introduces nicks in the DNA strand. Cleaves the DNA backbone by beta-delta elimination to generate a single-strand break at the site of the removed base with both 3'- and 5'-phosphates. This Pseudomonas fluorescens (strain SBW25) protein is Formamidopyrimidine-DNA glycosylase.